Here is a 333-residue protein sequence, read N- to C-terminus: T-cell surface glycoprotein CD1b (333 aa).

The N-terminal stretch at 1-17 (MLLLPFQLLAVLFPGGN) is a signal peptide. Residues 18-303 (SEHAFQGPTS…YWRNPTSIGS (286 aa)) are Extracellular-facing. N-linked (GlcNAc...) asparagine glycans are attached at residues Asn-38, Asn-75, and Asn-146. 3 disulfide bridges follow: Cys-120–Cys-184, Cys-149–Cys-163, and Cys-224–Cys-279. One can recognise an Ig-like domain in the interval 185–295 (PRYLLGVLNA…LEGQDIILYW (111 aa)). An N-linked (GlcNAc...) asparagine glycan is attached at Asn-258. Residues 304 to 324 (IVLAIIVPSLLLLLCLALWYM) traverse the membrane as a helical segment. The Cytoplasmic segment spans residues 325–333 (RRRSYQNIP). An Internalization signal motif is present at residues 329 to 332 (YQNI).

Heterodimer with B2M (beta-2-microglobulin). Interacts with saposin C. Expressed on cortical thymocytes, on certain T-cell leukemias, and in various other tissues.

Its subcellular location is the cell membrane. The protein localises to the endosome membrane. It is found in the lysosome membrane. Its function is as follows. Antigen-presenting protein that binds self and non-self lipid and glycolipid antigens and presents them to T-cell receptors on natural killer T-cells. The polypeptide is T-cell surface glycoprotein CD1b (CD1B) (Homo sapiens (Human)).